The chain runs to 329 residues: Cathepsin K (329 aa).

The signal sequence occupies residues 1-15 (MWVFKFLLLPVVSFA). A propeptide spans 16 to 114 (LSPEETLDTQ…TLYTPEWEGR (99 aa)) (activation peptide). N103 carries N-linked (GlcNAc...) asparagine glycosylation. 2 disulfide bridges follow: C136–C177 and C170–C210. The active site involves C139. The N-linked (GlcNAc...) asparagine glycan is linked to N213. A disulfide bond links C269 and C318. Catalysis depends on residues H276 and N296.

It belongs to the peptidase C1 family.

It localises to the lysosome. The protein localises to the secreted. The protein resides in the apical cell membrane. It catalyses the reaction Broad proteolytic activity. With small-molecule substrates and inhibitors, the major determinant of specificity is P2, which is preferably Leu, Met &gt; Phe, and not Arg.. Thiol protease involved in osteoclastic bone resorption and may participate partially in the disorder of bone remodeling. Displays potent endoprotease activity against fibrinogen at acid pH. May play an important role in extracellular matrix degradation. Involved in the release of thyroid hormone thyroxine (T4) by limited proteolysis of TG/thyroglobulin in the thyroid follicle lumen. This Rattus norvegicus (Rat) protein is Cathepsin K (Ctsk).